The chain runs to 696 residues: Ribonucleoside-diphosphate reductase subunit beta (696 aa).

Fe cation contacts are provided by Asp97, Glu127, and His130. Tyr134 is an active-site residue. Fe cation is bound by residues Glu194 and Glu228. The DOD-type homing endonuclease domain maps to 377-507; sequence DGTIDSKRNG…FVQALCALGG (131 aa). His577 provides a ligand contact to Fe cation.

It belongs to the ribonucleoside diphosphate reductase small chain family. Tetramer of two alpha and two beta subunits. It depends on Fe cation as a cofactor. Post-translationally, this protein undergoes a protein self splicing that involves a post-translational excision of the intervening region (intein) followed by peptide ligation.

The catalysed reaction is a 2'-deoxyribonucleoside 5'-diphosphate + [thioredoxin]-disulfide + H2O = a ribonucleoside 5'-diphosphate + [thioredoxin]-dithiol. In terms of biological role, provides the precursors necessary for DNA synthesis. Catalyzes the biosynthesis of deoxyribonucleotides from the corresponding ribonucleotides. The chain is Ribonucleoside-diphosphate reductase subunit beta (nrdB) from Aquifex aeolicus (strain VF5).